The following is a 249-amino-acid chain: 5'-nucleotidase SurE (249 aa).

The a divalent metal cation site is built by D8, D9, S39, and N91.

Belongs to the SurE nucleotidase family. Requires a divalent metal cation as cofactor.

The protein localises to the cytoplasm. It catalyses the reaction a ribonucleoside 5'-phosphate + H2O = a ribonucleoside + phosphate. Its function is as follows. Nucleotidase that shows phosphatase activity on nucleoside 5'-monophosphates. This Haemophilus influenzae (strain PittGG) protein is 5'-nucleotidase SurE.